We begin with the raw amino-acid sequence, 476 residues long: Probable cytosolic Fe-S cluster assembly factor GF22738 (476 aa).

[4Fe-4S] cluster is bound by residues Cys-23, Cys-68, Cys-71, Cys-74, Cys-187, Cys-243, Cys-395, and Cys-399.

The protein belongs to the NARF family.

In terms of biological role, component of the cytosolic iron-sulfur (Fe/S) protein assembly machinery. Required for maturation of extramitochondrial Fe/S proteins. In Drosophila ananassae (Fruit fly), this protein is Probable cytosolic Fe-S cluster assembly factor GF22738.